A 165-amino-acid chain; its full sequence is UPF0262 protein Sala_0765 (165 aa).

It belongs to the UPF0262 family.

In Sphingopyxis alaskensis (strain DSM 13593 / LMG 18877 / RB2256) (Sphingomonas alaskensis), this protein is UPF0262 protein Sala_0765.